Here is a 390-residue protein sequence, read N- to C-terminus: S-adenosylmethionine synthase 4 (390 aa).

Glutamate 9 contributes to the Mg(2+) binding site. Histidine 15 is a binding site for ATP. Residue glutamate 43 coordinates K(+). Residues glutamate 56 and glutamine 99 each contribute to the L-methionine site. Residues 167–169, 235–238, aspartate 246, 252–253, alanine 269, lysine 273, and lysine 277 each bind ATP; these read DGK, SGRF, and RK. An L-methionine-binding site is contributed by aspartate 246. Lysine 277 serves as a coordination point for L-methionine.

The protein belongs to the AdoMet synthase family. Homotetramer. Mn(2+) is required as a cofactor. It depends on Mg(2+) as a cofactor. Requires Co(2+) as cofactor. K(+) serves as cofactor.

Its subcellular location is the cytoplasm. The catalysed reaction is L-methionine + ATP + H2O = S-adenosyl-L-methionine + phosphate + diphosphate. It functions in the pathway amino-acid biosynthesis; S-adenosyl-L-methionine biosynthesis; S-adenosyl-L-methionine from L-methionine: step 1/1. Functionally, catalyzes the formation of S-adenosylmethionine from methionine and ATP. The reaction comprises two steps that are both catalyzed by the same enzyme: formation of S-adenosylmethionine (AdoMet) and triphosphate, and subsequent hydrolysis of the triphosphate. The chain is S-adenosylmethionine synthase 4 (METK4) from Populus trichocarpa (Western balsam poplar).